Reading from the N-terminus, the 287-residue chain is Immunoglobulin alpha Fc receptor (287 aa).

A signal peptide spans 1–21; that stretch reads MDPKQTTLLCLVLCLGQRIQA. At 22–227 the chain is on the extracellular side; it reads QEGDFPMPFI…SIHQDYTTQN (206 aa). Ig-like C2-type domains are found at residues 42–107 and 139–200; these read DGSV…IGHY and GENI…YNRS. A disulfide bridge links C49 with C100. Residues N65, N79, N141, N177, and N186 are each glycosylated (N-linked (GlcNAc...) asparagine). Cysteines 146 and 193 form a disulfide. Residues 228-246 traverse the membrane as a helical segment; the sequence is LIRMAVAGLVLVALLAILV. Residues 247–287 are Cytoplasmic-facing; it reads ENWHSHTALNKEASADVAEPSWSQQMCQPGLTFARTPSVCK.

As to quaternary structure, associates with the Fc epsilon RI gamma 2 receptor inducing tyrosine phosphorylation of gamma 2. In terms of assembly, (Microbial infection) Interacts with Staphylococcus aureus protein SSL11. In terms of tissue distribution, isoform A.1, isoform A.2 and isoform A.3 are differentially expressed between blood and mucosal myeloid cells. Isoform A.1, isoform A.2 and isoform A.3 are expressed in monocytes. Isoform A.1 and isoform A.2 are expressed in alveolar macrophages; however only one isoform is expressed at alveolar macrophages surfaces.

The protein resides in the cell membrane. It localises to the secreted. Functionally, binds to the Fc region of immunoglobulins alpha. Mediates several functions including cytokine production. In Homo sapiens (Human), this protein is Immunoglobulin alpha Fc receptor (FCAR).